A 622-amino-acid chain; its full sequence is Low affinity potassium transport system protein Kup (622 aa).

Transmembrane regions (helical) follow at residues leucine 9–leucine 29, valine 49–leucine 69, valine 103–isoleucine 123, proline 137–isoleucine 157, valine 165–leucine 185, valine 213–alanine 233, tryptophan 247–leucine 267, proline 276–alanine 296, isoleucine 337–phenylalanine 357, leucine 363–threonine 383, phenylalanine 396–leucine 416, and leucine 419–threonine 439.

It belongs to the HAK/KUP transporter (TC 2.A.72) family.

It localises to the cell inner membrane. It carries out the reaction K(+)(in) + H(+)(in) = K(+)(out) + H(+)(out). Functionally, responsible for the low-affinity transport of potassium into the cell. Likely operates as a K(+):H(+) symporter. The protein is Low affinity potassium transport system protein Kup of Shigella boydii serotype 18 (strain CDC 3083-94 / BS512).